Consider the following 420-residue polypeptide: Reticulon-4 receptor-like 2 (420 aa).

The signal sequence occupies residues 1–46 (MLPGLRRLLQAPASACLLLMLLALPLAAPSCPMLCTCYSSPPTVSC). Intrachain disulfides connect Cys-31-Cys-37 and Cys-35-Cys-46. Residues 47–60 (QANNFSSVPLSLPP) form the LRRNT domain. Asn-50 is a glycosylation site (N-linked (GlcNAc...) asparagine). 8 LRR repeats span residues 61–82 (STQRLFLQNNLIRTLRPGTFGS), 83–104 (NLLTLWLFSNNLSTIYPGTFRH), 107–129 (ALEELDLGDNRHLRSLEPDTFQG), 132–153 (RLQSLHLYRCQLSSLPGNIFRG), 156–177 (SLQYLYLQENSLLHLQDDLFAD), 180–201 (NLSHLFLHGNRLRLLTEHVFRG), 204–225 (SLDRLLLHGNRLQGVHRAAFRG), and 228–249 (RLTILYLFNNSLASLPGEALAD). The N-linked (GlcNAc...) asparagine glycan is linked to Asn-93. N-linked (GlcNAc...) asparagine glycosylation is present at Asn-236. The region spanning 261–312 (NPWACDCRARPLWAWFQRARVSSSDVTCATPPERQGRDLRALREADFQACPP) is the LRRCT domain. 2 cysteine pairs are disulfide-bonded: Cys-265-Cys-288 and Cys-267-Cys-310. The tract at residues 308–399 (QACPPAAPTR…CQAPPDSRGP (92 aa)) is disordered. An important for interaction with MAG region spans residues 315–327 (PTRPGSRARGNSS). Residues 351 to 360 (LPAEDSRGRQ) show a composition bias toward basic and acidic residues. Cys-390 is lipidated: GPI-anchor amidated cysteine. Positions 391–420 (QAPPDSRGPALSAGLPSPLLCLLLLVPHHL) are cleaved as a propeptide — removed in mature form.

The protein belongs to the Nogo receptor family. Interaction with MAG is controversial, and may be indirect. Does not interact with MAG, OMG and RTN4. Interacts with MAG. In terms of processing, undergoes zinc metalloproteinase-mediated ectodomain shedding in neuroblastoma cells; is released both as a full-length ectodomain and an N-terminal fragment containing the leucine-rich repeat (LRR) region of the protein. N-glycosylated. As to expression, highly expressed in brain and liver. Expressed at lower levels in kidney, mammary gland, placenta, skeletal muscle, spleen and thyroid.

Its subcellular location is the cell membrane. The protein localises to the membrane raft. The protein resides in the cell projection. It localises to the dendrite. It is found in the perikaryon. Its subcellular location is the axon. Functionally, cell surface receptor that plays a functionally redundant role in the inhibition of neurite outgrowth mediated by MAG. Plays a functionally redundant role in postnatal brain development. Contributes to normal axon migration across the brain midline and normal formation of the corpus callosum. Does not seem to play a significant role in regulating axon regeneration in the adult central nervous system. Protects motoneurons against apoptosis; protection against apoptosis is probably mediated by MAG. Like other family members, plays a role in restricting the number dendritic spines and the number of synapses that are formed during brain development. Signaling mediates activation of Rho and downstream reorganization of the actin cytoskeleton. The polypeptide is Reticulon-4 receptor-like 2 (Homo sapiens (Human)).